The following is a 216-amino-acid chain: Transmembrane protein 125 (216 aa).

Helical transmembrane passes span 32 to 52, 65 to 85, 111 to 131, and 144 to 164; these read LLCF…GVAL, LAVG…QLMS, AVVV…LAGL, and MLSV…GLLL.

Its subcellular location is the membrane. This Mus musculus (Mouse) protein is Transmembrane protein 125 (Tmem125).